The sequence spans 426 residues: Tryptophan--tRNA ligase (426 aa).

A 'HIGH' region motif is present at residues 66-74; the sequence is PSGEMHLGN. Positions 314 to 318 match the 'KMSKS' region motif; it reads KMSSS.

Belongs to the class-I aminoacyl-tRNA synthetase family.

The protein resides in the cytoplasm. The enzyme catalyses tRNA(Trp) + L-tryptophan + ATP = L-tryptophyl-tRNA(Trp) + AMP + diphosphate + H(+). The chain is Tryptophan--tRNA ligase from Thermoplasma acidophilum (strain ATCC 25905 / DSM 1728 / JCM 9062 / NBRC 15155 / AMRC-C165).